The following is a 293-amino-acid chain: Fructose-bisphosphate aldolase class 1 (293 aa).

Catalysis depends on Glu-176, which acts as the Proton acceptor. Catalysis depends on Lys-211, which acts as the Schiff-base intermediate with dihydroxyacetone-P.

It belongs to the class I fructose-bisphosphate aldolase family.

The enzyme catalyses beta-D-fructose 1,6-bisphosphate = D-glyceraldehyde 3-phosphate + dihydroxyacetone phosphate. Its pathway is carbohydrate degradation; glycolysis; D-glyceraldehyde 3-phosphate and glycerone phosphate from D-glucose: step 4/4. The chain is Fructose-bisphosphate aldolase class 1 from Porphyromonas gingivalis (strain ATCC 33277 / DSM 20709 / CIP 103683 / JCM 12257 / NCTC 11834 / 2561).